We begin with the raw amino-acid sequence, 229 residues long: Cytidylate kinase (229 aa).

10-18 provides a ligand contact to ATP; sequence GYSSCGKST.

This sequence belongs to the cytidylate kinase family. Type 1 subfamily.

The protein localises to the cytoplasm. The enzyme catalyses CMP + ATP = CDP + ADP. It catalyses the reaction dCMP + ATP = dCDP + ADP. The sequence is that of Cytidylate kinase from Phocaeicola vulgatus (strain ATCC 8482 / DSM 1447 / JCM 5826 / CCUG 4940 / NBRC 14291 / NCTC 11154) (Bacteroides vulgatus).